The chain runs to 142 residues: Serine protease inhibitor (142 aa).

Ser1 bears the N-acetylserine mark.

Its function is as follows. Serine protease inhibitor. Active against beta-trypsin and alpha-chymotrypsin with dissociation constants of 0.35 nM and 40 nM respectively. Inhibits factor XIa, but not other enzymes involved in coagulation and fibrinolysis. Does not inhibit subtilisin, lysyl endopeptidase, arginyl endopeptidase or papain. This is Serine protease inhibitor from Lentinula edodes (Shiitake mushroom).